Here is a 701-residue protein sequence, read N- to C-terminus: Glycine--tRNA ligase beta subunit (701 aa).

This sequence belongs to the class-II aminoacyl-tRNA synthetase family. Tetramer of two alpha and two beta subunits.

It is found in the cytoplasm. It catalyses the reaction tRNA(Gly) + glycine + ATP = glycyl-tRNA(Gly) + AMP + diphosphate. This chain is Glycine--tRNA ligase beta subunit, found in Anaeromyxobacter dehalogenans (strain 2CP-1 / ATCC BAA-258).